Here is a 422-residue protein sequence, read N- to C-terminus: Succinate--CoA ligase [ADP-forming] subunit beta, mitochondrial (422 aa).

A mitochondrion-targeting transit peptide spans 1–27 (MVRGSLGKLASRALSVAGKWQHQQLRR). The ATP-grasp domain maps to 36–279 (AELMGKYGIN…TTQEDPREVA (244 aa)). Residues K75, 82 to 84 (GRG), and E142 contribute to the ATP site. 2 residues coordinate Mg(2+): N234 and D248. Residues N299 and 356–358 (GIM) each bind substrate.

The protein belongs to the succinate/malate CoA ligase beta subunit family. As to quaternary structure, heterodimer of an alpha and a beta subunit. It depends on Mg(2+) as a cofactor.

The protein localises to the mitochondrion. It carries out the reaction succinate + ATP + CoA = succinyl-CoA + ADP + phosphate. It participates in carbohydrate metabolism; tricarboxylic acid cycle; succinate from succinyl-CoA (ligase route): step 1/1. In terms of biological role, succinyl-CoA synthetase functions in the citric acid cycle (TCA), coupling the hydrolysis of succinyl-CoA to the synthesis of ATP and thus represents the only step of substrate-level phosphorylation in the TCA. The beta subunit provides nucleotide specificity of the enzyme and binds the substrate succinate, while the binding sites for coenzyme A and phosphate are found in the alpha subunit. The sequence is that of Succinate--CoA ligase [ADP-forming] subunit beta, mitochondrial from Oryza sativa subsp. japonica (Rice).